The chain runs to 224 residues: MIKKFFITGTDTNVGKTIVSSILLKKATMSGYQTAGYKPVSSGGQKKSSGFFNQDAILLKKSSSIILSDREVNPIAFFENAPPHILSKFQKRSIKKEELSLGLNNITKKSNWILVEGAGGWYTPLSCKDTFSSWVKQEKLTVIIIIAIKLGCINHAILTEKAIISDQIKCGGWIANNIFPKDKYNMHYIQTLLNYIKSPFLGVVPYFKNKNRINFKKIKIKLPK.

13 to 18 (NVGKTI) contributes to the ATP binding site. Residue Thr17 participates in Mg(2+) binding. Lys38 is an active-site residue. A substrate-binding site is contributed by Ser42. Residues Asp55, 116 to 119 (EGAG), 176 to 177 (NN), and Asn211 contribute to the ATP site. Residues Asp55 and Glu116 each coordinate Mg(2+).

This sequence belongs to the dethiobiotin synthetase family. In terms of assembly, homodimer. Mg(2+) serves as cofactor.

The protein localises to the cytoplasm. It carries out the reaction (7R,8S)-7,8-diammoniononanoate + CO2 + ATP = (4R,5S)-dethiobiotin + ADP + phosphate + 3 H(+). Its pathway is cofactor biosynthesis; biotin biosynthesis; biotin from 7,8-diaminononanoate: step 1/2. In terms of biological role, catalyzes a mechanistically unusual reaction, the ATP-dependent insertion of CO2 between the N7 and N8 nitrogen atoms of 7,8-diaminopelargonic acid (DAPA, also called 7,8-diammoniononanoate) to form a ureido ring. This is ATP-dependent dethiobiotin synthetase BioD from Buchnera aphidicola subsp. Acyrthosiphon pisum (strain APS) (Acyrthosiphon pisum symbiotic bacterium).